The primary structure comprises 232 residues: Large ribosomal subunit protein uL1 (232 aa).

It belongs to the universal ribosomal protein uL1 family. In terms of assembly, part of the 50S ribosomal subunit.

In terms of biological role, binds directly to 23S rRNA. The L1 stalk is quite mobile in the ribosome, and is involved in E site tRNA release. Protein L1 is also a translational repressor protein, it controls the translation of the L11 operon by binding to its mRNA. The protein is Large ribosomal subunit protein uL1 of Bordetella bronchiseptica (strain ATCC BAA-588 / NCTC 13252 / RB50) (Alcaligenes bronchisepticus).